Reading from the N-terminus, the 145-residue chain is 3-hydroxyacyl-[acyl-carrier-protein] dehydratase FabZ (145 aa).

The active site involves H48.

Belongs to the thioester dehydratase family. FabZ subfamily.

The protein localises to the cytoplasm. The catalysed reaction is a (3R)-hydroxyacyl-[ACP] = a (2E)-enoyl-[ACP] + H2O. In terms of biological role, involved in unsaturated fatty acids biosynthesis. Catalyzes the dehydration of short chain beta-hydroxyacyl-ACPs and long chain saturated and unsaturated beta-hydroxyacyl-ACPs. The chain is 3-hydroxyacyl-[acyl-carrier-protein] dehydratase FabZ from Campylobacter hominis (strain ATCC BAA-381 / DSM 21671 / CCUG 45161 / LMG 19568 / NCTC 13146 / CH001A).